The chain runs to 341 residues: MANILEPFGIRIDADNSFVQAAVTGFLLVGIASFAAPLISTIRVLLSLFVLPGKSLTTFGPRGTWALITGASDGIGKEFALSLAAKGYNLILVSRTQSKLDSLSADITSKYGPKIAVKTLAMDFALNKDADYNNMKKLIEGLDVSILINNVGLSHSIPVPFTETPKQEMTDIIMINCMATLRVTQLVTPGMVSRKRGLVLTMASFGGFFPTPLLATYSGSKAFLQQWSTALASELEPHGVYVQCVQSHLVTTAMSKIRKTSALVPNPKQFVDATLSKIGRSGGAQGVAFTSTPYWSHGLMHWFLSRFLGERSETVVKVNRGMHENIRRRALRKAERDAKKQ.

A helical membrane pass occupies residues 22–42 (AVTGFLLVGIASFAAPLISTI). NADP(+)-binding residues include leucine 67, aspartate 123, aspartate 131, asparagine 150, tyrosine 217, lysine 221, valine 250, and threonine 252. The active-site Proton donor is tyrosine 217. Lysine 221 functions as the Lowers pKa of active site Tyr in the catalytic mechanism.

Belongs to the short-chain dehydrogenases/reductases (SDR) family.

The protein localises to the endoplasmic reticulum membrane. It catalyses the reaction a very-long-chain (3R)-3-hydroxyacyl-CoA + NADP(+) = a very-long-chain 3-oxoacyl-CoA + NADPH + H(+). Its pathway is lipid metabolism; fatty acid biosynthesis. Component of the microsomal membrane bound fatty acid elongation system, which produces the 26-carbon very long-chain fatty acids (VLCFA) from palmitate. Catalyzes the reduction of the 3-ketoacyl-CoA intermediate that is formed in each cycle of fatty acid elongation. VLCFAs serve as precursors for ceramide and sphingolipids. In Pyrenophora tritici-repentis (strain Pt-1C-BFP) (Wheat tan spot fungus), this protein is Very-long-chain 3-oxoacyl-CoA reductase.